Reading from the N-terminus, the 188-residue chain is Elongation factor P-like protein (188 aa).

This sequence belongs to the elongation factor P family.

This is Elongation factor P-like protein from Saccharophagus degradans (strain 2-40 / ATCC 43961 / DSM 17024).